We begin with the raw amino-acid sequence, 92 residues long: Small ribosomal subunit protein bS20 (92 aa).

Belongs to the bacterial ribosomal protein bS20 family.

Binds directly to 16S ribosomal RNA. In Rickettsia africae (strain ESF-5), this protein is Small ribosomal subunit protein bS20.